Here is a 149-residue protein sequence, read N- to C-terminus: Flagellar assembly factor FliW (149 aa).

This sequence belongs to the FliW family. In terms of assembly, interacts with translational regulator CsrA and flagellin(s).

It localises to the cytoplasm. Functionally, acts as an anti-CsrA protein, binds CsrA and prevents it from repressing translation of its target genes, one of which is flagellin. Binds to flagellin and participates in the assembly of the flagellum. The chain is Flagellar assembly factor FliW from Thermotoga petrophila (strain ATCC BAA-488 / DSM 13995 / JCM 10881 / RKU-1).